Here is a 398-residue protein sequence, read N- to C-terminus: Phospholipase C (398 aa).

The N-terminal stretch at 1–28 (MKRKICKALICAALATSLWAGASTKVYA) is a signal peptide. Positions 29, 39, 84, 96, 154, 158, 164, 176, and 180 each coordinate Zn(2+). The region spanning 29-278 (WDGKIDGTGT…HDVSEGNDPS (250 aa)) is the Zn-dependent PLC domain. The segment at 275 to 283 (NDPSVGKNV) is linker. In terms of domain architecture, PLAT spans 284-398 (KELVAYISTS…ISGNSTYNIK (115 aa)). Residues Asp297, Gly299, Thr300, Asp301, Asp321, Asn322, Gly324, Asn325, Asp326, Asp364, and Ala365 each contribute to the Ca(2+) site.

It belongs to the bacterial zinc-metallophospholipase C family. Ca(2+) serves as cofactor. Zn(2+) is required as a cofactor.

It localises to the secreted. It carries out the reaction a 1,2-diacyl-sn-glycero-3-phosphocholine + H2O = phosphocholine + a 1,2-diacyl-sn-glycerol + H(+). Bacterial hemolysins are exotoxins that attack blood cell membranes and cause cell rupture. Constitutes an essential virulence factor in gas gangrene. Binds to eukaryotic membranes where it hydrolyzes both phosphatidylcholine and sphingomyelin. The diacylglycerol produced can activate both the arachidonic acid pathway, leading to modulation of the inflammatory response cascade and thrombosis, and protein kinase C, leading to activation of eukaryotic phospholipases and further membrane damage. Acts on human and mouse erythrocytes, but not on rabbit or horse erythrocytes. The polypeptide is Phospholipase C (plc) (Clostridium perfringens (strain ATCC 13124 / DSM 756 / JCM 1290 / NCIMB 6125 / NCTC 8237 / Type A)).